We begin with the raw amino-acid sequence, 499 residues long: Calcium/calmodulin-dependent protein kinase type II subunit delta (499 aa).

Alanine 2 carries the N-acetylalanine modification. Residues 14–272 form the Protein kinase domain; sequence YQLFEELGKG…ASEALKHPWI (259 aa). ATP contacts are provided by residues 20 to 28 and lysine 43; that span reads LGKGAFSVV. The active-site Proton acceptor is aspartate 136. The segment at 283 to 292 is autoinhibitory domain; it reads HRQETVDCLK. Threonine 287 carries the post-translational modification Phosphothreonine; by autocatalysis. The interval 291–301 is calmodulin-binding; it reads LKKFNARRKLK. Phosphothreonine; by autocatalysis occurs at positions 306 and 307. Phosphoserine is present on serine 315. N6-acetyllysine is present on lysine 318. 2 positions are modified to phosphoserine: serine 319 and serine 330. Threonine 331 is modified (phosphothreonine). Residue serine 333 is modified to Phosphoserine. 2 positions are modified to phosphothreonine: threonine 336 and threonine 337. A phosphoserine mark is found at serine 404, serine 490, and serine 494.

This sequence belongs to the protein kinase superfamily. CAMK Ser/Thr protein kinase family. CaMK subfamily. In terms of assembly, CAMK2 is composed of 4 different chains: alpha (CAMK2A), beta (CAMK2B), gamma (CAMK2G), and delta (CAMK2D). The different isoforms assemble into homo- or heteromultimeric holoenzymes composed of 12 subunits with two hexameric rings stacked one on top of the other. Interacts with RRAD CACNB2. In terms of processing, autophosphorylation of Thr-287 following activation by Ca(2+)/calmodulin. Phosphorylation of Thr-287 locks the kinase into an activated state.

The protein resides in the cell membrane. It localises to the sarcolemma. The protein localises to the sarcoplasmic reticulum membrane. It carries out the reaction L-seryl-[protein] + ATP = O-phospho-L-seryl-[protein] + ADP + H(+). The enzyme catalyses L-threonyl-[protein] + ATP = O-phospho-L-threonyl-[protein] + ADP + H(+). Activated by Ca(2+)/calmodulin. Binding of calmodulin results in conformational change that relieves intrasteric autoinhibition and allows autophosphorylation of Thr-287 which turns the kinase in a constitutively active form and confers to the kinase a Ca(2+)-independent activity. In terms of biological role, calcium/calmodulin-dependent protein kinase involved in the regulation of Ca(2+) homeostatis and excitation-contraction coupling (ECC) in heart by targeting ion channels, transporters and accessory proteins involved in Ca(2+) influx into the myocyte, Ca(2+) release from the sarcoplasmic reticulum (SR), SR Ca(2+) uptake and Na(+) and K(+) channel transport. Targets also transcription factors and signaling molecules to regulate heart function. In its activated form, is involved in the pathogenesis of dilated cardiomyopathy and heart failure. Contributes to cardiac decompensation and heart failure by regulating SR Ca(2+) release via direct phosphorylation of RYR2 Ca(2+) channel on 'Ser-2808'. In the nucleus, phosphorylates the MEF2 repressor HDAC4, promoting its nuclear export and binding to 14-3-3 protein, and expression of MEF2 and genes involved in the hypertrophic program. Is essential for left ventricular remodeling responses to myocardial infarction. In pathological myocardial remodeling acts downstream of the beta adrenergic receptor signaling cascade to regulate key proteins involved in ECC. Regulates Ca(2+) influx to myocytes by binding and phosphorylating the L-type Ca(2+) channel subunit beta-2 CACNB2. In addition to Ca(2+) channels, can target and regulate the cardiac sarcolemmal Na(+) channel Nav1.5/SCN5A and the K+ channel Kv4.3/KCND3, which contribute to arrhythmogenesis in heart failure. Phosphorylates phospholamban (PLN/PLB), an endogenous inhibitor of SERCA2A/ATP2A2, contributing to the enhancement of SR Ca(2+) uptake that may be important in frequency-dependent acceleration of relaxation (FDAR) and maintenance of contractile function during acidosis. May participate in the modulation of skeletal muscle function in response to exercise, by regulating SR Ca(2+) transport through phosphorylation of PLN/PLB and triadin, a ryanodine receptor-coupling factor. In response to interferon-gamma (IFN-gamma) stimulation, catalyzes phosphorylation of STAT1, stimulating the JAK-STAT signaling pathway. In Sus scrofa (Pig), this protein is Calcium/calmodulin-dependent protein kinase type II subunit delta (CAMK2D).